Reading from the N-terminus, the 396-residue chain is DNA-directed RNA polymerase subunit 6 (396 aa).

Disordered stretches follow at residues 1–137 (MSSK…DIED) and 290–396 (NQQK…DYSE). Acidic residues-rich tracts occupy residues 21 to 53 (EYYD…DDEN), 76 to 88 (IDPD…DTDG), and 97 to 137 (EMGE…DIED). A compositionally biased stretch (polar residues) spans 290 to 312 (NQQKNSTTDTETLSTQENASTRV). Low complexity-rich tracts occupy residues 313–338 (SGSN…SKSN) and 346–366 (NSRT…SRTG). Residues 367 to 380 (SKSKKSSNTKSKSK) show a composition bias toward basic residues. The segment covering 385–396 (NSDDSDYSDYSE) has biased composition (acidic residues).

This sequence belongs to the archaeal Rpo6/eukaryotic RPB6 RNA polymerase subunit family.

It carries out the reaction RNA(n) + a ribonucleoside 5'-triphosphate = RNA(n+1) + diphosphate. DNA-dependent RNA polymerase catalyzes the transcription of DNA into RNA using the four ribonucleoside triphosphates as substrates. The chain is DNA-directed RNA polymerase subunit 6 from Acanthamoeba polyphaga (Amoeba).